A 531-amino-acid chain; its full sequence is T-complex protein 1 subunit zeta-2 (531 aa).

The protein belongs to the TCP-1 chaperonin family. As to quaternary structure, component of the chaperonin-containing T-complex (TRiC), a heterooligomeric complex of about 850 to 900 kDa that forms two stacked rings, 12 to 16 nm in diameter.

The protein localises to the cytoplasm. In terms of biological role, component of the chaperonin-containing T-complex (TRiC), a molecular chaperone complex that assists the folding of proteins upon ATP hydrolysis. The polypeptide is T-complex protein 1 subunit zeta-2 (CCT6B) (Bos taurus (Bovine)).